The primary structure comprises 201 residues: Natural cytotoxicity triggering receptor 3 (201 aa).

An N-terminal signal peptide occupies residues 1 to 18; sequence MAWMLLLILIMVHPGSCA. The Ig-like domain maps to 19-126; sequence LWVSQPPEIR…VGTGNGTRLV (108 aa). Residues 19–135 lie on the Extracellular side of the membrane; that stretch reads LWVSQPPEIR…VVEKEHPQLG (117 aa). An intrachain disulfide couples Cys39 to Cys108. N-linked (GlcNAc...) asparagine glycosylation is found at Asn42 and Asn121. A helical membrane pass occupies residues 136-156; it reads AGTVLLLRAGFYAVSFLSVAV. Residues 157-201 lie on the Cytoplasmic side of the membrane; the sequence is GSTVYYQGKCLTWKGPRRQLPAVVPAPLPPPCGSSAHLLPPVPGG.

It belongs to the natural cytotoxicity receptor (NCR) family. Homodimer in the unliganted form. Interacts with CD3Z. Interacts with and is activated by binding to NCR3LG1. Interacts with and is activated by binding to BAG6. Interacts with and is inhibited by binding to LGALS3. In terms of tissue distribution, selectively expressed by all resting and activated NK cells and weakly expressed in spleen.

The protein resides in the cell membrane. Functionally, cell membrane receptor of natural killer/NK cells that is activated by binding of extracellular ligands including BAG6 and NCR3LG1. Stimulates NK cells cytotoxicity toward neighboring cells producing these ligands. It controls, for instance, NK cells cytotoxicity against tumor cells. Engagement of NCR3 by BAG6 also promotes myeloid dendritic cells (DC) maturation, both through killing DCs that did not acquire a mature phenotype, and inducing the release by NK cells of TNFA and IFNG which promote DC maturation. In Homo sapiens (Human), this protein is Natural cytotoxicity triggering receptor 3.